The primary structure comprises 550 residues: Arginine--tRNA ligase (550 aa).

The 'HIGH' region motif lies at 130–140; it reads ANPTGPIHLGG.

The protein belongs to the class-I aminoacyl-tRNA synthetase family. Monomer.

The protein localises to the cytoplasm. It catalyses the reaction tRNA(Arg) + L-arginine + ATP = L-arginyl-tRNA(Arg) + AMP + diphosphate. In Rhodococcus erythropolis (strain PR4 / NBRC 100887), this protein is Arginine--tRNA ligase.